A 113-amino-acid chain; its full sequence is Protein USP2 (113 aa).

The signal sequence occupies residues 1–18 (MKITMFFAALSAASGVFA). 6 tandem repeats follow at residues 32–37 (IGAGVG), 40–45 (IGAGVG), 46–49 (SYGY), 50–53 (PYGA), 59–65 (LQLLPLR), and 69–75 (LRRLPLR). Positions 32–45 (IGAGVGIGIGAGVG) are 2 X 6 AA repeats. Residues 46–53 (SYGYPYGA) form a 2 X 4 AA approximate tandem repeats region. A 2 X 7 AA approximate repeats region spans residues 59–75 (LQLLPLRWLPLRRLPLR).

It localises to the secreted. The polypeptide is Protein USP2 (USP2) (Puccinia graminis (Black stem rust fungus)).